Here is a 455-residue protein sequence, read N- to C-terminus: Tubby-like F-box protein 1 (455 aa).

Positions 54–112 constitute an F-box domain; the sequence is ETPWANLPPELLRDVIKRLEESESVWPARRHVVACASVCRSWRDMCKEIVQSPELSGKI. Residues 386 to 414 form a disordered region; it reads QPQPQPQPQPQPQPLTQPQPSGQTDGPDK. Residues 388 to 402 show a composition bias toward pro residues; that stretch reads QPQPQPQPQPQPLTQ.

Belongs to the TUB family. As to expression, ubiquitous.

The protein is Tubby-like F-box protein 1 of Arabidopsis thaliana (Mouse-ear cress).